Here is a 118-residue protein sequence, read N- to C-terminus: Large ribosomal subunit protein bL20 (118 aa).

Belongs to the bacterial ribosomal protein bL20 family.

Its function is as follows. Binds directly to 23S ribosomal RNA and is necessary for the in vitro assembly process of the 50S ribosomal subunit. It is not involved in the protein synthesizing functions of that subunit. This Thermotoga neapolitana (strain ATCC 49049 / DSM 4359 / NBRC 107923 / NS-E) protein is Large ribosomal subunit protein bL20.